The following is a 259-amino-acid chain: Glucosamine-6-phosphate deaminase (259 aa).

The active-site Proton acceptor; for enolization step is D66. The active-site For ring-opening step is the D135. H137 (proton acceptor; for ring-opening step) is an active-site residue. E142 functions as the For ring-opening step in the catalytic mechanism.

This sequence belongs to the glucosamine/galactosamine-6-phosphate isomerase family. NagB subfamily.

The enzyme catalyses alpha-D-glucosamine 6-phosphate + H2O = beta-D-fructose 6-phosphate + NH4(+). The protein operates within amino-sugar metabolism; N-acetylneuraminate degradation; D-fructose 6-phosphate from N-acetylneuraminate: step 5/5. In terms of biological role, catalyzes the reversible isomerization-deamination of glucosamine 6-phosphate (GlcN6P) to form fructose 6-phosphate (Fru6P) and ammonium ion. This chain is Glucosamine-6-phosphate deaminase, found in Rhodococcus jostii (strain RHA1).